Reading from the N-terminus, the 130-residue chain is Small ribosomal subunit protein uS8A (130 aa).

It belongs to the universal ribosomal protein uS8 family. Component of the small ribosomal subunit (SSU). Mature yeast ribosomes consist of a small (40S) and a large (60S) subunit. The 40S small subunit contains 1 molecule of ribosomal RNA (18S rRNA) and 33 different proteins (encoded by 57 genes). The large 60S subunit contains 3 rRNA molecules (25S, 5.8S and 5S rRNA) and 46 different proteins (encoded by 81 genes).

Its subcellular location is the cytoplasm. Its function is as follows. Component of the ribosome, a large ribonucleoprotein complex responsible for the synthesis of proteins in the cell. The small ribosomal subunit (SSU) binds messenger RNAs (mRNAs) and translates the encoded message by selecting cognate aminoacyl-transfer RNA (tRNA) molecules. The large subunit (LSU) contains the ribosomal catalytic site termed the peptidyl transferase center (PTC), which catalyzes the formation of peptide bonds, thereby polymerizing the amino acids delivered by tRNAs into a polypeptide chain. The nascent polypeptides leave the ribosome through a tunnel in the LSU and interact with protein factors that function in enzymatic processing, targeting, and the membrane insertion of nascent chains at the exit of the ribosomal tunnel. In Saccharomyces cerevisiae (strain ATCC 204508 / S288c) (Baker's yeast), this protein is Small ribosomal subunit protein uS8A.